Here is a 321-residue protein sequence, read N- to C-terminus: Citrate synthase (321 aa).

Residues histidine 248 and aspartate 306 contribute to the active site.

Belongs to the citrate synthase family.

The catalysed reaction is oxaloacetate + acetyl-CoA + H2O = citrate + CoA + H(+). Its pathway is carbohydrate metabolism; tricarboxylic acid cycle; isocitrate from oxaloacetate: step 1/2. This Bartonella elizabethae (Rochalimaea elizabethae) protein is Citrate synthase (gltA).